Reading from the N-terminus, the 566-residue chain is Protein pacG (566 aa).

Residues 79 to 326 (TSFDPPPPAE…RSPRNFQSRK (248 aa)) constitute a DNA-binding region (NDT80). Disordered regions lie at residues 314-422 (VRGR…EAHR) and 448-470 (DSRPHTSFSNDLASKSLSVDSGR). The segment covering 333-349 (SAAASRKNAQAAAASNN) has biased composition (low complexity). 3 stretches are compositionally biased toward polar residues: residues 365–391 (VKSSSPETSSNGVPQQSPPNWALATNS), 403–413 (HSSVYSQSSPE), and 452–466 (HTSFSNDLASKSLSV).

It localises to the nucleus. The protein resides in the cytoplasm. Functionally, transcription factor that acts as a positive regulator of nonrepressible acid phosphatase activity. Is a major regulator of responses to nitrogen and carbon starvation and is essential for the expression of genes involved in vegetative incompatibility (like pin-c, het-6, and tol). Vegetative incompatibility is a non-self-recognition system ubiquitous in filamentous fungi which results in programmed cell death. The protein is Protein pacG (pacG) of Emericella nidulans (strain FGSC A4 / ATCC 38163 / CBS 112.46 / NRRL 194 / M139) (Aspergillus nidulans).